The sequence spans 457 residues: MGSDRWKNIGGAPQMEDSVQDKSQRKGCGYILCTVLLSVAVLLAVTVTGAVLFMNHYHAPSTEPPPVITTNMEDPNALVTIERADSSHINIFIDPNCPDPFPRLEGLQSALLSALADHDSEQKVAGGKERALLTSLSDQVAQMVSQVARQRADWENVKKVQNGLGAEIGALKNEQGRLIKLLSEGQSHVAQLGSSVSEVLETVQRELGSGRPRVKADLQRAPSRSSRPRGCANGSKPRDCYDIYMSGQQEDGVYSVFPIHYPSGFQVFCDMTTDGGGWTVFQRREDGSVNFFQGWEQYRDGFGKLTGEHWLGLQRIHLLTMQTHYQLRIDLEDFENATAYALYNTFGVGLFSVNPEEDGYPITISDYTGTAGDSLGKHSGMKFTTKDMDNDHSENNCASFYHGAWWYRNCHTSNLNGQYLRGHHASYADGIEWSSWTGWQYSLKFTEMKIRPQREEN.

Residues 1 to 20 are disordered; sequence MGSDRWKNIGGAPQMEDSVQ. Residues 1 to 33 are Cytoplasmic-facing; the sequence is MGSDRWKNIGGAPQMEDSVQDKSQRKGCGYILC. A helical; Signal-anchor for type II membrane protein transmembrane segment spans residues 34–54; it reads TVLLSVAVLLAVTVTGAVLFM. The Extracellular segment spans residues 55-457; sequence NHYHAPSTEP…MKIRPQREEN (403 aa). The interval 211 to 235 is disordered; it reads RPRVKADLQRAPSRSSRPRGCANGS. The Fibrinogen C-terminal domain occupies 231–454; the sequence is CANGSKPRDC…FTEMKIRPQR (224 aa). N233 is a glycosylation site (N-linked (GlcNAc...) asparagine). An intrachain disulfide couples C240 to C269. The N-linked (GlcNAc...) asparagine glycan is linked to N336. The Ca(2+) site is built by D389 and D391. A disulfide bridge connects residues C397 and C410.

As to quaternary structure, homotetramer; disulfide-linked.

The protein localises to the membrane. Its function is as follows. Acetyl group-binding receptor which shows a calcium-dependent binding to acetylated structures such as chitin, some N-acetylated carbohydrates, and amino acids. This chain is Fibrinogen C domain-containing protein 1 (fibcd1), found in Xenopus tropicalis (Western clawed frog).